Reading from the N-terminus, the 377-residue chain is DNA replication and repair protein RecF (377 aa).

30–37 (GLNGSGKT) lines the ATP pocket.

This sequence belongs to the RecF family.

The protein resides in the cytoplasm. The RecF protein is involved in DNA metabolism; it is required for DNA replication and normal SOS inducibility. RecF binds preferentially to single-stranded, linear DNA. It also seems to bind ATP. This Cytophaga hutchinsonii (strain ATCC 33406 / DSM 1761 / CIP 103989 / NBRC 15051 / NCIMB 9469 / D465) protein is DNA replication and repair protein RecF.